The chain runs to 27 residues: Phospholipase A2 2 (27 aa).

The disordered stretch occupies residues 1–27; the sequence is FMKVIDPGTKWCGPGNKAADDTDNGKN. Ca(2+)-binding residues include Trp11, Gly13, and Gly15. Residues 18 to 27 show a composition bias toward basic and acidic residues; sequence AADDTDNGKN.

The protein belongs to the phospholipase A2 family. It depends on Ca(2+) as a cofactor. In terms of tissue distribution, expressed by the venom gland.

The protein localises to the secreted. It catalyses the reaction a 1,2-diacyl-sn-glycero-3-phosphocholine + H2O = a 1-acyl-sn-glycero-3-phosphocholine + a fatty acid + H(+). In terms of biological role, PLA2 catalyzes the calcium-dependent hydrolysis of the 2-acyl groups in 3-sn-phosphoglycerides. In Opisthacanthus cayaporum (South American scorpion), this protein is Phospholipase A2 2.